Consider the following 316-residue polypeptide: Palmitoyltransferase ZDHHC3-A (316 aa).

The Cytoplasmic portion of the chain corresponds to 1 to 45 (MRSPVPRFRDVERQASGLQPPQCLPSCHERQSSMWFIKDACGIVC). Residues 46–66 (AIITWFLVFFAEFVVLFVMLI) traverse the membrane as a helical segment. The Lumenal segment spans residues 67-70 (PSKN). The chain crosses the membrane as a helical span at residues 71-91 (LTYSLVNGTLFNSLAFLALAS). At 92–169 (HFRAMCTDPG…NCVGENNQKY (78 aa)) the chain is on the cytoplasmic side. The DHHC domain occupies 124–175 (VYKCPKCCSIKPDRAHHCSVCKRCIRKMDHHCPWVNNCVGENNQKYFVLFTM). A lipid anchor (S-palmitoyl cysteine) is attached at C144. Residue C155 is the S-palmitoyl cysteine intermediate of the active site. A helical membrane pass occupies residues 170–190 (FVLFTMYICLISLHSLVMVVF). The Lumenal portion of the chain corresponds to 191-212 (HFLNCFEDDWTKCSTFSPPATV). Residues 213–233 (ILLILLCFEGLLFLIFTSVMF) form a helical membrane-spanning segment. Residues 234–316 (GTQVHSICTD…DVIEIPLEPH (83 aa)) lie on the Cytoplasmic side of the membrane.

This sequence belongs to the DHHC palmitoyltransferase family. As to quaternary structure, monomer. Homooligomers. The monomeric form has a higher catalytic activity. Forms heterooligomers with zdhhc7. In terms of processing, autopalmitoylated.

Its subcellular location is the golgi apparatus membrane. It catalyses the reaction L-cysteinyl-[protein] + hexadecanoyl-CoA = S-hexadecanoyl-L-cysteinyl-[protein] + CoA. It carries out the reaction L-cysteinyl-[protein] + tetradecanoyl-CoA = S-tetradecanoyl-L-cysteinyl-[protein] + CoA. The enzyme catalyses L-cysteinyl-[protein] + octadecanoyl-CoA = S-octadecanoyl-L-cysteinyl-[protein] + CoA. Functionally, golgi-localized palmitoyltransferase that catalyzes the addition of palmitate onto various protein substrates and regulates their association with membranes. Has no stringent fatty acid selectivity and in addition to palmitate can also transfer onto target proteins myristate from tetradecanoyl-CoA and stearate from octadecanoyl-CoA. This chain is Palmitoyltransferase ZDHHC3-A (zdhhc3a), found in Danio rerio (Zebrafish).